The primary structure comprises 804 residues: Endoplasmin (804 aa).

Positions 1-21 (MRALWVLGLCCVLLTFGSVRA) are cleaved as a signal peptide. The SRT pseudosubstrate motif signature appears at 42–44 (SRT). The N-linked (GlcNAc...) asparagine glycan is linked to asparagine 62. Phosphoserine is present on serine 64. An N-linked (GlcNAc...) asparagine glycan is attached at asparagine 107. ATP is bound by residues asparagine 107, aspartate 149, and asparagine 162. Position 168 is an N6-(2-hydroxyisobutyryl)lysine (lysine 168). At serine 172 the chain carries Phosphoserine. ATP is bound at residue phenylalanine 199. Asparagine 217 carries an N-linked (GlcNAc...) asparagine glycan. Threonine 288 is subject to Phosphothreonine; by CK2. The tract at residues 288–323 (TVEEPMEEEEAAKEEKEDSDDEAAVEEEEEEKKPKT) is disordered. Residues 289-317 (VEEPMEEEEAAKEEKEDSDDEAAVEEEEE) show a composition bias toward acidic residues. Serine 306 carries the phosphoserine; by CK2 modification. Position 403 is a phosphoserine (serine 403). Residue lysine 404 is modified to N6-succinyllysine. An N-linked (GlcNAc...) asparagine glycan is attached at asparagine 445. Serine 447 carries the phosphoserine modification. Lysine 479 carries the N6-acetyllysine modification. Residues asparagine 481 and asparagine 502 are each glycosylated (N-linked (GlcNAc...) asparagine). Lysine 633 is modified (N6-succinyllysine). Residues 750 to 804 (DPDAKVEEEPEEEPEETTEDTTEDTEQDDEEEMDAGTDDEEQETVKKSTAEKDEL) form a disordered region. A compositionally biased stretch (acidic residues) spans 757–791 (EEPEEEPEETTEDTTEDTEQDDEEEMDAGTDDEEQ). Residues threonine 766, threonine 770, threonine 774, and threonine 786 each carry the phosphothreonine; by CK2 modification. The span at 792-804 (ETVKKSTAEKDEL) shows a compositional bias: basic and acidic residues. Positions 801–804 (KDEL) match the Prevents secretion from ER motif.

The protein belongs to the heat shock protein 90 family. In terms of assembly, homodimer; disulfide-linked. Component of an EIF2 complex at least composed of CELF1/CUGBP1, CALR, CALR3, EIF2S1, EIF2S2, HSP90B1 and HSPA5. Part of a large chaperone multiprotein complex comprising DNAJB11, HSP90B1, HSPA5, HYOU, PDIA2, PDIA4, PDIA6, PPIB, SDF2L1, UGGT1 and very small amounts of ERP29, but not, or at very low levels, CALR nor CANX. Interacts with AIMP1; regulates its retention in the endoplasmic reticulum. Hyperglycosylated form interacts with OS9; promoting its degradation by the endoplasmic reticulum associated degradation (ERAD). Interacts with CNPY3. This interaction is disrupted in the presence of ATP. Interacts with TLR4 and TLR9, but not with TLR3. Interacts with MZB1 in a calcium-dependent manner. Interacts with METTL23. Interacts with IL1B; the interaction facilitates cargo translocation into the ERGIC. Interacts with EIF2AK3. Phosphorylated by CK2. In terms of processing, N-glycosylated cotranslationally at Asn-217 by STT3A-containing OST-A complex: this glycosylation is constitutive. In response to various stress, 5 additional facultative sites (Asn-62, Asn-107, Asn-445, Asn-481 and Asn-502) can be glycosylated post-translationally by STT3B-containing OST-B complex, leading to a hyperglycosylated form that is degraded by the ER-associated degradation (ERAD) pathway. In normal conditions, the OST-A complex together with CCDC134 prevent glycosylation at facultative sites during protein folding, thereby preventing hyperglycosylation. Mechanistically, nascent HSP90B1 is tethered during translation to a specialized CCDC134-containing translocon that forms a microenvironment for its folding, in which STT3A associates with the SRT pseudosubstrate motif, and prevents access to facultative glycosylation sites until folding is completed, rendering its facultative sites inaccessible to the OST-B complex. As to expression, detected in heart muscle (at protein level).

The protein localises to the endoplasmic reticulum lumen. It is found in the sarcoplasmic reticulum lumen. Its subcellular location is the melanosome. It catalyses the reaction ATP + H2O = ADP + phosphate + H(+). ATP-dependent chaperone involved in the processing of proteins in the endoplasmic reticulum, regulating their transport. Together with MESD, acts as a modulator of the Wnt pathway by promoting the folding of LRP6, a coreceptor of the canonical Wnt pathway. When associated with CNPY3, required for proper folding of Toll-like receptors. Promotes folding and trafficking of TLR4 to the cell surface. May participate in the unfolding of cytosolic leaderless cargos (lacking the secretion signal sequence) such as the interleukin 1/IL-1 to facilitate their translocation into the ERGIC (endoplasmic reticulum-Golgi intermediate compartment) and secretion; the translocation process is mediated by the cargo receptor TMED10. May also function in endoplasmic reticulum associated degradation (ERAD); it is however unclear whether it participates to ERAD or is a target of ERAD. In Canis lupus familiaris (Dog), this protein is Endoplasmin (HSP90B1).